A 179-amino-acid chain; its full sequence is MKFLFDLFPVILFFAAFKLADIYTATAVAIGATVLQIGWVWFRHRKVEPMQWVSLLIIAVFGGATLVLHNETFIKWKPTVLYWLFAAALLGSVLVWRKNLIRAMMEKQVSLPDPVWARLNLAWAGFFAAMGVLNLYVAYQFSTEAWVNFKLFGSMGLMLVFIVAQSVWLSRHMPENTQD.

The next 6 helical transmembrane spans lie at 3–23 (FLFD…ADIY), 24–44 (TATA…WFRH), 49–69 (PMQW…LVLH), 76–96 (WKPT…VLVW), 121–141 (LAWA…AYQF), and 149–169 (FKLF…SVWL).

This sequence belongs to the YciB family.

The protein localises to the cell inner membrane. Plays a role in cell envelope biogenesis, maintenance of cell envelope integrity and membrane homeostasis. The polypeptide is Inner membrane-spanning protein YciB (Cupriavidus taiwanensis (strain DSM 17343 / BCRC 17206 / CCUG 44338 / CIP 107171 / LMG 19424 / R1) (Ralstonia taiwanensis (strain LMG 19424))).